A 309-amino-acid polypeptide reads, in one-letter code: ADP-L-glycero-D-manno-heptose-6-epimerase (309 aa).

NADP(+) contacts are provided by residues 10–11, 31–32, K38, K53, 75–79, and N92; these read FI, DN, and LGACS. Y140 functions as the Proton acceptor in the catalytic mechanism. K144 serves as a coordination point for NADP(+). N169 serves as a coordination point for substrate. Residues V170 and K178 each contribute to the NADP(+) site. The active-site Proton acceptor is the K178. Substrate-binding positions include S180, H187, 201–204, R209, and Y272; that span reads FLGS.

It belongs to the NAD(P)-dependent epimerase/dehydratase family. HldD subfamily. As to quaternary structure, homopentamer. The cofactor is NADP(+).

The enzyme catalyses ADP-D-glycero-beta-D-manno-heptose = ADP-L-glycero-beta-D-manno-heptose. Its pathway is nucleotide-sugar biosynthesis; ADP-L-glycero-beta-D-manno-heptose biosynthesis; ADP-L-glycero-beta-D-manno-heptose from D-glycero-beta-D-manno-heptose 7-phosphate: step 4/4. Its function is as follows. Catalyzes the interconversion between ADP-D-glycero-beta-D-manno-heptose and ADP-L-glycero-beta-D-manno-heptose via an epimerization at carbon 6 of the heptose. The polypeptide is ADP-L-glycero-D-manno-heptose-6-epimerase (Hamiltonella defensa subsp. Acyrthosiphon pisum (strain 5AT)).